The primary structure comprises 363 residues: 3-isopropylmalate dehydrogenase (363 aa).

NAD(+) is bound at residue Gly78–Glu91. Substrate-binding residues include Arg99, Arg109, Arg138, and Asp227. Positions 227, 251, and 255 each coordinate Mg(2+). An NAD(+)-binding site is contributed by Gly285 to Asn297.

Belongs to the isocitrate and isopropylmalate dehydrogenases family. LeuB type 1 subfamily. As to quaternary structure, homodimer. Mg(2+) serves as cofactor. Mn(2+) is required as a cofactor.

Its subcellular location is the cytoplasm. It carries out the reaction (2R,3S)-3-isopropylmalate + NAD(+) = 4-methyl-2-oxopentanoate + CO2 + NADH. Its pathway is amino-acid biosynthesis; L-leucine biosynthesis; L-leucine from 3-methyl-2-oxobutanoate: step 3/4. Functionally, catalyzes the oxidation of 3-carboxy-2-hydroxy-4-methylpentanoate (3-isopropylmalate) to 3-carboxy-4-methyl-2-oxopentanoate. The product decarboxylates to 4-methyl-2 oxopentanoate. The chain is 3-isopropylmalate dehydrogenase from Salmonella choleraesuis (strain SC-B67).